Reading from the N-terminus, the 224-residue chain is Urease accessory protein UreF (224 aa).

The protein belongs to the UreF family. UreD, UreF and UreG form a complex that acts as a GTP-hydrolysis-dependent molecular chaperone, activating the urease apoprotein by helping to assemble the nickel containing metallocenter of UreC. The UreE protein probably delivers the nickel.

The protein localises to the cytoplasm. Its function is as follows. Required for maturation of urease via the functional incorporation of the urease nickel metallocenter. This Pseudomonas putida (strain GB-1) protein is Urease accessory protein UreF.